The following is a 503-amino-acid chain: Glycerol kinase (503 aa).

Threonine 14 is an ADP binding site. Residues threonine 14, threonine 15, and serine 16 each coordinate ATP. Threonine 14 contacts sn-glycerol 3-phosphate. Arginine 18 is a binding site for ADP. Arginine 84, glutamate 85, tyrosine 136, and aspartate 246 together coordinate sn-glycerol 3-phosphate. Glycerol is bound by residues arginine 84, glutamate 85, tyrosine 136, aspartate 246, and glutamine 247. ADP-binding residues include threonine 268 and glycine 311. Residues threonine 268, glycine 311, glutamine 315, and glycine 412 each contribute to the ATP site. ADP is bound by residues glycine 412 and asparagine 416.

This sequence belongs to the FGGY kinase family.

It carries out the reaction glycerol + ATP = sn-glycerol 3-phosphate + ADP + H(+). The protein operates within polyol metabolism; glycerol degradation via glycerol kinase pathway; sn-glycerol 3-phosphate from glycerol: step 1/1. With respect to regulation, inhibited by fructose 1,6-bisphosphate (FBP). Its function is as follows. Key enzyme in the regulation of glycerol uptake and metabolism. Catalyzes the phosphorylation of glycerol to yield sn-glycerol 3-phosphate. The protein is Glycerol kinase of Haemophilus influenzae (strain PittEE).